Reading from the N-terminus, the 101-residue chain is Small ribosomal subunit protein uS10 (101 aa).

Belongs to the universal ribosomal protein uS10 family. Part of the 30S ribosomal subunit.

In terms of biological role, involved in the binding of tRNA to the ribosomes. The protein is Small ribosomal subunit protein uS10 of Bacteroides fragilis (strain ATCC 25285 / DSM 2151 / CCUG 4856 / JCM 11019 / LMG 10263 / NCTC 9343 / Onslow / VPI 2553 / EN-2).